A 380-amino-acid polypeptide reads, in one-letter code: Queuine tRNA-ribosyltransferase (380 aa).

Asp-96 (proton acceptor) is an active-site residue. Residues 96-100 (DSGGF), Asp-150, Gln-193, and Gly-220 contribute to the substrate site. The interval 251–257 (GVGAPDS) is RNA binding. The Nucleophile role is filled by Asp-270. The interval 275–279 (TRIAR) is RNA binding; important for wobble base 34 recognition. 4 residues coordinate Zn(2+): Cys-308, Cys-310, Cys-313, and His-339.

The protein belongs to the queuine tRNA-ribosyltransferase family. In terms of assembly, homodimer. Within each dimer, one monomer is responsible for RNA recognition and catalysis, while the other monomer binds to the replacement base PreQ1. It depends on Zn(2+) as a cofactor.

It carries out the reaction 7-aminomethyl-7-carbaguanine + guanosine(34) in tRNA = 7-aminomethyl-7-carbaguanosine(34) in tRNA + guanine. It functions in the pathway tRNA modification; tRNA-queuosine biosynthesis. In terms of biological role, catalyzes the base-exchange of a guanine (G) residue with the queuine precursor 7-aminomethyl-7-deazaguanine (PreQ1) at position 34 (anticodon wobble position) in tRNAs with GU(N) anticodons (tRNA-Asp, -Asn, -His and -Tyr). Catalysis occurs through a double-displacement mechanism. The nucleophile active site attacks the C1' of nucleotide 34 to detach the guanine base from the RNA, forming a covalent enzyme-RNA intermediate. The proton acceptor active site deprotonates the incoming PreQ1, allowing a nucleophilic attack on the C1' of the ribose to form the product. After dissociation, two additional enzymatic reactions on the tRNA convert PreQ1 to queuine (Q), resulting in the hypermodified nucleoside queuosine (7-(((4,5-cis-dihydroxy-2-cyclopenten-1-yl)amino)methyl)-7-deazaguanosine). The sequence is that of Queuine tRNA-ribosyltransferase from Streptococcus pyogenes serotype M1.